Here is a 712-residue protein sequence, read N- to C-terminus: DNA ligase (712 aa).

NAD(+)-binding positions include aspartate 53–aspartate 57, serine 103–leucine 104, and glutamate 133. Lysine 135 serves as the catalytic N6-AMP-lysine intermediate. 4 residues coordinate NAD(+): arginine 156, glutamate 196, lysine 315, and lysine 339. Residues cysteine 433, cysteine 436, cysteine 452, and cysteine 458 each coordinate Zn(2+). A BRCT domain is found at serine 622–proline 711.

The protein belongs to the NAD-dependent DNA ligase family. LigA subfamily. The cofactor is Mg(2+). Mn(2+) serves as cofactor.

It catalyses the reaction NAD(+) + (deoxyribonucleotide)n-3'-hydroxyl + 5'-phospho-(deoxyribonucleotide)m = (deoxyribonucleotide)n+m + AMP + beta-nicotinamide D-nucleotide.. Functionally, DNA ligase that catalyzes the formation of phosphodiester linkages between 5'-phosphoryl and 3'-hydroxyl groups in double-stranded DNA using NAD as a coenzyme and as the energy source for the reaction. It is essential for DNA replication and repair of damaged DNA. The sequence is that of DNA ligase from Mycolicibacterium gilvum (strain PYR-GCK) (Mycobacterium gilvum (strain PYR-GCK)).